Reading from the N-terminus, the 573-residue chain is Poly(ribitol-phosphate) beta-N-acetylglucosaminyltransferase TarS (573 aa).

UDP-N-acetyl-alpha-D-glucosamine-binding positions include Pro-9, Asp-41, Asn-68, Arg-76, 92–94 (DSD), Arg-127, and Glu-178. Asp-94 contributes to the Mn(2+) binding site. The Proton acceptor role is filled by Asp-179. Residues Arg-207 and 211 to 213 (HMS) each bind UDP-N-acetyl-alpha-D-glucosamine.

The protein belongs to the glycosyltransferase 2 family. As to quaternary structure, homotrimer. The cofactor is Mn(2+).

The enzyme catalyses 4-O-[(D-ribitylphospho)(n)-di{(2R)-glycerylphospho}]-N-acetyl-beta-D-mannosaminyl-(1-&gt;4)-N-acetyl-alpha-D-glucosaminyl di-trans,octa-cis-undecaprenyl diphosphate + n UDP-N-acetyl-alpha-D-glucosamine = 4-O-([2-N-acetyl-beta-D-glucosaminyl-1-D-ribitylphospho](n)-di{[2R]-1-glycerylphospho})-N-acetyl-beta-D-mannosaminyl-(1-&gt;4)-N-acetyl-alpha-D-glucosaminyl di-trans,octa-cis-undecaprenyl diphosphate + n UDP + n H(+). It participates in cell wall biogenesis; poly(ribitol phosphate) teichoic acid biosynthesis. Its function is as follows. Attaches beta-O-GlcNAc (beta-O-N-acetyl-D-glucosamine) residues to the C4 position of poly(RboP)-wall teichoic acids (WTAs). Prefers UDP-GlcNAc as a donor substrate and is specific for poly(ribitol phosphate) WTAs. Can also use UDP-Glc and UDP-GalNAc, but not UDP-galactose or UDP-glucuronic acid. Mediates beta-lactam resistance in methicillin resistant Staphylococcus aureus (MRSA) strains. This is Poly(ribitol-phosphate) beta-N-acetylglucosaminyltransferase TarS from Staphylococcus aureus (strain MW2).